Here is a 428-residue protein sequence, read N- to C-terminus: Tyrosine--tRNA ligase (428 aa).

Tyr41 contributes to the L-tyrosine binding site. The 'HIGH' region signature appears at 46 to 55 (PTADSLHLGH). Residues Tyr179 and Gln183 each contribute to the L-tyrosine site. A 'KMSKS' region motif is present at residues 239-243 (KFGKT). Lys242 provides a ligand contact to ATP. The S4 RNA-binding domain maps to 361–418 (ADLMQALVDAELQPSRGQARKTIASNAVTINGEKQSDPEYIFNDEDRLFGRYTLLRRG).

It belongs to the class-I aminoacyl-tRNA synthetase family. TyrS type 1 subfamily. Homodimer.

The protein resides in the cytoplasm. It catalyses the reaction tRNA(Tyr) + L-tyrosine + ATP = L-tyrosyl-tRNA(Tyr) + AMP + diphosphate + H(+). Catalyzes the attachment of tyrosine to tRNA(Tyr) in a two-step reaction: tyrosine is first activated by ATP to form Tyr-AMP and then transferred to the acceptor end of tRNA(Tyr). This chain is Tyrosine--tRNA ligase, found in Salmonella paratyphi C (strain RKS4594).